The following is a 364-amino-acid chain: tRNA 2-selenouridine synthase (364 aa).

The 124-residue stretch at 14-137 folds into the Rhodanese domain; sequence LIADTPIIDV…LRQTAIQATI (124 aa). The S-selanylcysteine intermediate role is filled by cysteine 97.

It belongs to the SelU family. As to quaternary structure, monomer.

The enzyme catalyses 5-methylaminomethyl-2-thiouridine(34) in tRNA + selenophosphate + (2E)-geranyl diphosphate + H2O + H(+) = 5-methylaminomethyl-2-selenouridine(34) in tRNA + (2E)-thiogeraniol + phosphate + diphosphate. The catalysed reaction is 5-methylaminomethyl-2-thiouridine(34) in tRNA + (2E)-geranyl diphosphate = 5-methylaminomethyl-S-(2E)-geranyl-thiouridine(34) in tRNA + diphosphate. It carries out the reaction 5-methylaminomethyl-S-(2E)-geranyl-thiouridine(34) in tRNA + selenophosphate + H(+) = 5-methylaminomethyl-2-(Se-phospho)selenouridine(34) in tRNA + (2E)-thiogeraniol. It catalyses the reaction 5-methylaminomethyl-2-(Se-phospho)selenouridine(34) in tRNA + H2O = 5-methylaminomethyl-2-selenouridine(34) in tRNA + phosphate. Its function is as follows. Involved in the post-transcriptional modification of the uridine at the wobble position (U34) of tRNA(Lys), tRNA(Glu) and tRNA(Gln). Catalyzes the conversion of 2-thiouridine (S2U-RNA) to 2-selenouridine (Se2U-RNA). Acts in a two-step process involving geranylation of 2-thiouridine (S2U) to S-geranyl-2-thiouridine (geS2U) and subsequent selenation of the latter derivative to 2-selenouridine (Se2U) in the tRNA chain. The polypeptide is tRNA 2-selenouridine synthase (Escherichia coli O157:H7).